Consider the following 239-residue polypeptide: Ribosomal RNA large subunit methyltransferase E (239 aa).

Residues 1–20 (MTKAPIAGNRTGRKLGQRVK) form a disordered region. Residues 11–20 (TGRKLGQRVK) are compositionally biased toward basic residues. S-adenosyl-L-methionine is bound by residues glycine 81, tryptophan 83, aspartate 104, aspartate 120, and aspartate 144. The Proton acceptor role is filled by lysine 184.

It belongs to the class I-like SAM-binding methyltransferase superfamily. RNA methyltransferase RlmE family.

Its subcellular location is the cytoplasm. It catalyses the reaction uridine(2552) in 23S rRNA + S-adenosyl-L-methionine = 2'-O-methyluridine(2552) in 23S rRNA + S-adenosyl-L-homocysteine + H(+). In terms of biological role, specifically methylates the uridine in position 2552 of 23S rRNA at the 2'-O position of the ribose in the fully assembled 50S ribosomal subunit. The protein is Ribosomal RNA large subunit methyltransferase E of Rhizobium leguminosarum bv. trifolii (strain WSM2304).